A 558-amino-acid polypeptide reads, in one-letter code: Proline--tRNA ligase (558 aa).

It belongs to the class-II aminoacyl-tRNA synthetase family. ProS type 1 subfamily. As to quaternary structure, homodimer.

It localises to the cytoplasm. The catalysed reaction is tRNA(Pro) + L-proline + ATP = L-prolyl-tRNA(Pro) + AMP + diphosphate. Catalyzes the attachment of proline to tRNA(Pro) in a two-step reaction: proline is first activated by ATP to form Pro-AMP and then transferred to the acceptor end of tRNA(Pro). As ProRS can inadvertently accommodate and process non-cognate amino acids such as alanine and cysteine, to avoid such errors it has two additional distinct editing activities against alanine. One activity is designated as 'pretransfer' editing and involves the tRNA(Pro)-independent hydrolysis of activated Ala-AMP. The other activity is designated 'posttransfer' editing and involves deacylation of mischarged Ala-tRNA(Pro). The misacylated Cys-tRNA(Pro) is not edited by ProRS. This Coprothermobacter proteolyticus (strain ATCC 35245 / DSM 5265 / OCM 4 / BT) protein is Proline--tRNA ligase.